Reading from the N-terminus, the 380-residue chain is Zinc metalloproteinase-like protein nas-21 (380 aa).

An N-terminal signal peptide occupies residues 1–24 (MNYFITFFFMHIAVLNFYFRFSNG). The Peptidase M12A domain occupies 46–234 (QALRMDNEPR…LMINEYYQCS (189 aa)). An N-linked (GlcNAc...) asparagine glycan is attached at Asn87. Cystine bridges form between Cys90/Cys233 and Cys110/Cys130. Glu138 is an active-site residue. Asn253, Asn269, Asn283, and Asn304 each carry an N-linked (GlcNAc...) asparagine glycan.

The protein localises to the secreted. Its function is as follows. May lack metalloprotease activity. The chain is Zinc metalloproteinase-like protein nas-21 (nas-21) from Caenorhabditis elegans.